Reading from the N-terminus, the 160-residue chain is ATP synthase subunit delta, mitochondrial (160 aa).

A mitochondrion-targeting transit peptide spans 1 to 22 (MLRSIIGKSASRSLNFVAKRSY).

Belongs to the ATPase epsilon chain family. F-type ATPases have 2 components, CF(1) - the catalytic core - and CF(0) - the membrane proton channel. CF(1) has five subunits: alpha(3), beta(3), gamma(1), delta(1), epsilon(1). CF(0) has three main subunits: a, b and c.

It is found in the mitochondrion. Its subcellular location is the mitochondrion inner membrane. In terms of biological role, mitochondrial membrane ATP synthase (F(1)F(0) ATP synthase or Complex V) produces ATP from ADP in the presence of a proton gradient across the membrane which is generated by electron transport complexes of the respiratory chain. F-type ATPases consist of two structural domains, F(1) - containing the extramembraneous catalytic core, and F(0) - containing the membrane proton channel, linked together by a central stalk and a peripheral stalk. During catalysis, ATP turnover in the catalytic domain of F(1) is coupled via a rotary mechanism of the central stalk subunits to proton translocation. Part of the complex F(1) domain and of the central stalk which is part of the complex rotary element. Rotation of the central stalk against the surrounding alpha(3)beta(3) subunits leads to hydrolysis of ATP in three separate catalytic sites on the beta subunits. This chain is ATP synthase subunit delta, mitochondrial (ATP16), found in Saccharomyces cerevisiae (strain ATCC 204508 / S288c) (Baker's yeast).